The sequence spans 231 residues: Large ribosomal subunit protein uL1 (231 aa).

It belongs to the universal ribosomal protein uL1 family. In terms of assembly, part of the 50S ribosomal subunit.

Binds directly to 23S rRNA. The L1 stalk is quite mobile in the ribosome, and is involved in E site tRNA release. Functionally, protein L1 is also a translational repressor protein, it controls the translation of the L11 operon by binding to its mRNA. This chain is Large ribosomal subunit protein uL1, found in Teredinibacter turnerae (strain ATCC 39867 / T7901).